We begin with the raw amino-acid sequence, 200 residues long: Charged multivesicular body protein 6-B (200 aa).

Residue G2 is the site of N-myristoyl glycine attachment. A coiled-coil region spans residues 9–102; the sequence is RRSRVTEQDK…FAQIEMKVIE (94 aa). A disordered region spans residues 165–200; that stretch reads QEDLELPEAPSEPLSDTVPEKQAVKNRPKPQLVAAS. The short motif at 168-179 is the Type-2 MIT-interacting motif element; sequence LELPEAPSEPLS.

This sequence belongs to the SNF7 family. Probable core component of the endosomal sorting required for transport complex III (ESCRT-III). ESCRT-III components are thought to multimerize to form a flat lattice on the perimeter membrane of the endosome.

Its subcellular location is the endomembrane system. The protein localises to the late endosome membrane. In terms of biological role, probable core component of the endosomal sorting required for transport complex III (ESCRT-III) which is involved in multivesicular bodies (MVBs) formation and sorting of endosomal cargo proteins into MVBs. MVBs contain intraluminal vesicles (ILVs) that are generated by invagination and scission from the limiting membrane of the endosome and mostly are delivered to lysosomes enabling degradation of membrane proteins, such as stimulated growth factor receptors, lysosomal enzymes and lipids. In the ESCRT-III complex, it probably serves as an acceptor for the ESCRT-II complex on endosomal membranes. This is Charged multivesicular body protein 6-B (chmp6-b) from Xenopus laevis (African clawed frog).